We begin with the raw amino-acid sequence, 211 residues long: Nucleoside triphosphate pyrophosphatase (211 aa).

Aspartate 76 (proton acceptor) is an active-site residue.

This sequence belongs to the Maf family. It depends on a divalent metal cation as a cofactor.

Its subcellular location is the cytoplasm. It catalyses the reaction a ribonucleoside 5'-triphosphate + H2O = a ribonucleoside 5'-phosphate + diphosphate + H(+). The catalysed reaction is a 2'-deoxyribonucleoside 5'-triphosphate + H2O = a 2'-deoxyribonucleoside 5'-phosphate + diphosphate + H(+). Functionally, nucleoside triphosphate pyrophosphatase. May have a dual role in cell division arrest and in preventing the incorporation of modified nucleotides into cellular nucleic acids. This Saccharopolyspora erythraea (strain ATCC 11635 / DSM 40517 / JCM 4748 / NBRC 13426 / NCIMB 8594 / NRRL 2338) protein is Nucleoside triphosphate pyrophosphatase.